Reading from the N-terminus, the 469-residue chain is Protein YfjI (469 aa).

This chain is Protein YfjI (yfjI), found in Escherichia coli (strain K12).